A 544-amino-acid polypeptide reads, in one-letter code: Zinc finger protein 502 (544 aa).

Residue Lys43 forms a Glycyl lysine isopeptide (Lys-Gly) (interchain with G-Cter in SUMO2) linkage. 14 C2H2-type zinc fingers span residues 155-177 (WKCNECGKTFTQSSSLTQHQRTH), 183-205 (YTCEECGKAFSRSSFLVQHQRIH), 211-233 (YGCEQCGKTFRCRSFLTQHQRIH), 239-261 (YKCNECGNSFRNHSHLTEHQRIH), 267-289 (YKCNRCGKAFNQNTHLIHHQRIH), 295-317 (YICSECGSSFRKHSNLTQHQRIH), 323-345 (HKCDECGKTFQTKANLSQHQRIH), 351-373 (YKCKECGKAFCQSPSLIKHQRIH), 379-401 (YKCKECGKAFTQSTPLTKHQRIH), 407-429 (YKCSECGKAFIQSICLIRHQRSH), 435-457 (YKCNECGKGFNQNTCLTQHMRIH), 463-485 (YKCKECGKAFAHSSSLTEHHRTH), 491-513 (YKCSECEKTFRKYAHLSEHYRIH), and 519-541 (YECIECGKFFRHSSVLFRHQKLH).

Belongs to the krueppel C2H2-type zinc-finger protein family. (Microbial infection) Interacts with human respiratory syncytial virus (HRSV) matrix protein; this interaction probably facilitates viral release.

The protein resides in the nucleus. May be involved in transcriptional regulation. The polypeptide is Zinc finger protein 502 (ZNF502) (Homo sapiens (Human)).